The chain runs to 297 residues: Lipoyl synthase (297 aa).

7 residues coordinate [4Fe-4S] cluster: C40, C45, C51, C67, C71, C74, and S280. Positions A53–S269 constitute a Radical SAM core domain.

This sequence belongs to the radical SAM superfamily. Lipoyl synthase family. Requires [4Fe-4S] cluster as cofactor.

Its subcellular location is the cytoplasm. It catalyses the reaction [[Fe-S] cluster scaffold protein carrying a second [4Fe-4S](2+) cluster] + N(6)-octanoyl-L-lysyl-[protein] + 2 oxidized [2Fe-2S]-[ferredoxin] + 2 S-adenosyl-L-methionine + 4 H(+) = [[Fe-S] cluster scaffold protein] + N(6)-[(R)-dihydrolipoyl]-L-lysyl-[protein] + 4 Fe(3+) + 2 hydrogen sulfide + 2 5'-deoxyadenosine + 2 L-methionine + 2 reduced [2Fe-2S]-[ferredoxin]. The protein operates within protein modification; protein lipoylation via endogenous pathway; protein N(6)-(lipoyl)lysine from octanoyl-[acyl-carrier-protein]. Its function is as follows. Catalyzes the radical-mediated insertion of two sulfur atoms into the C-6 and C-8 positions of the octanoyl moiety bound to the lipoyl domains of lipoate-dependent enzymes, thereby converting the octanoylated domains into lipoylated derivatives. The protein is Lipoyl synthase of Bacillus cereus (strain ATCC 14579 / DSM 31 / CCUG 7414 / JCM 2152 / NBRC 15305 / NCIMB 9373 / NCTC 2599 / NRRL B-3711).